We begin with the raw amino-acid sequence, 139 residues long: Large ribosomal subunit protein bL21 (139 aa).

It belongs to the bacterial ribosomal protein bL21 family. In terms of assembly, part of the 50S ribosomal subunit. Contacts protein L20.

Its function is as follows. This protein binds to 23S rRNA in the presence of protein L20. The polypeptide is Large ribosomal subunit protein bL21 (Prochlorococcus marinus (strain NATL1A)).